We begin with the raw amino-acid sequence, 503 residues long: Glutamate/gamma-aminobutyrate antiporter (503 aa).

33 to 43 is an L-glutamate binding site; the sequence is LHLVFFLLLGG. Helical transmembrane passes span 35–55, 153–173, 194–214, 232–252, 366–386, 407–427, and 440–460; these read LVFF…LCAA, FVVG…AYFI, VSTL…EASA, ILLV…VAAV, LTVV…FVLI, IIAG…FVPP, and MILL…YELH.

Belongs to the amino acid-polyamine-organocation (APC) superfamily. Glutamate:GABA antiporter (GGA) (TC 2.A.3.7) family.

It is found in the cell membrane. The catalysed reaction is 4-aminobutanoate(in) + L-glutamate(out) = 4-aminobutanoate(out) + L-glutamate(in). In terms of biological role, involved in glutaminase-dependent acid resistance. Exchanges extracellular glutamate (Glu) for intracellular gamma-aminobutyric acid (GABA) under acidic conditions. The sequence is that of Glutamate/gamma-aminobutyrate antiporter (gadC) from Lactococcus lactis subsp. lactis (strain IL1403) (Streptococcus lactis).